A 71-amino-acid polypeptide reads, in one-letter code: Protein DP71L (71 aa).

Important for host CHOP inhibition regions lie at residues 16–18 (VRF) and 57–61 (LSAVL).

Belongs to the asfivirus DP71L family. In terms of assembly, interacts (via C-terminus) with host PPP1CB.

Its function is as follows. Interacts with the host phosphatase PP1 catalytic subunit (PPP1CB) and recruits it to dephosphorylate EIF2S1/eIF2alpha and therefore restores the host translation that has been shut-down by the host. Also inhibits the EIF2S1/eIF2alpha-ATF4-DDIT3/CHOP pathway. The protein is Protein DP71L of Ornithodoros (relapsing fever ticks).